The following is a 475-amino-acid chain: Eukaryotic translation initiation factor 3 subunit L (475 aa).

The region spanning 257 to 451 is the PCI domain; sequence DAIRMFSHIL…DLDYAMQGDL (195 aa).

Belongs to the eIF-3 subunit L family. Component of the eukaryotic translation initiation factor 3 (eIF-3) complex.

Its subcellular location is the cytoplasm. Component of the eukaryotic translation initiation factor 3 (eIF-3) complex, which is involved in protein synthesis of a specialized repertoire of mRNAs and, together with other initiation factors, stimulates binding of mRNA and methionyl-tRNAi to the 40S ribosome. The eIF-3 complex specifically targets and initiates translation of a subset of mRNAs involved in cell proliferation. The sequence is that of Eukaryotic translation initiation factor 3 subunit L from Botryotinia fuckeliana (strain B05.10) (Noble rot fungus).